Here is a 487-residue protein sequence, read N- to C-terminus: V-type proton ATPase subunit B2 (487 aa).

Position 2 is an N-acetylglycine (Gly-2).

Belongs to the ATPase alpha/beta chains family. As to quaternary structure, V-ATPase is a heteromultimeric enzyme composed of a peripheral catalytic V1 complex (components A to H) attached to an integral membrane V0 proton pore complex (components: a, c, c'', d and e).

Its subcellular location is the vacuole membrane. Functionally, non-catalytic subunit of the peripheral V1 complex of vacuolar ATPase. V-ATPase is responsible for acidifying a variety of intracellular compartments in eukaryotic cells. This Arabidopsis thaliana (Mouse-ear cress) protein is V-type proton ATPase subunit B2 (VHA-B2).